Here is a 149-residue protein sequence, read N- to C-terminus: Calmodulin-1 (149 aa).

Residue Ala-2 is modified to N-acetylalanine. EF-hand domains lie at 8 to 43 (EQIA…LGQN), 44 to 79 (PTEA…KMKD), 81 to 116 (DSEE…LGEK), and 117 to 149 (LTDE…MLAK). Ca(2+)-binding residues include Asp-21, Asp-23, Asp-25, Cys-27, Glu-32, Asp-57, Asp-59, Asn-61, Thr-63, Glu-68, Asp-94, Asp-96, Asn-98, and Glu-105. Lys-116 carries the post-translational modification N6,N6,N6-trimethyllysine. Ca(2+)-binding residues include Asp-130, Asp-132, Asp-134, Gln-136, and Glu-141.

This sequence belongs to the calmodulin family. High expression in stolon tips and stems, moderate in roots, and very low in leaves. Localized in the meristematic regions of the shoot and root tips, the tip of the developing tuber and the vascular zones of petiole and tuber. Not detected in mesophyll cells.

Calmodulin mediates the control of a large number of enzymes, ion channels and other proteins by Ca(2+). Among the enzymes to be stimulated by the calmodulin-Ca(2+) complex are a number of protein kinases and phosphatases. The sequence is that of Calmodulin-1 (PCM1) from Solanum tuberosum (Potato).